Consider the following 265-residue polypeptide: RNA-binding protein 7 (265 aa).

Gly-2 carries the post-translational modification N-acetylglycine. The RRM domain maps to 10-87 (RTLFVGNLET…RPIKIQFRSG (78 aa)). 2 ZCCHC8 binding regions span residues 25–35 (LLFELFHQAGP) and 59–76 (HEVS…IKLF). Positions 91–125 (ASQDASVSYPQHHVGNLSPTSTSPNSYERTVGNVS) are disordered. Positions 107–125 (LSPTSTSPNSYERTVGNVS) are enriched in polar residues. The residue at position 136 (Ser-136) is a Phosphoserine; by MAPKAPK2. Ser-137 bears the Phosphoserine mark. Arg-152 carries the omega-N-methylarginine modification. Disordered regions lie at residues 166–224 (DQLG…HGSD) and 237–265 (DDRN…SSRH). Residues 170 to 196 (FSPSAQPHGHTFNQSSSSQWRQDALSS) are compositionally biased toward polar residues. Ser-203 carries the post-translational modification Phosphoserine. Basic and acidic residues-rich tracts occupy residues 207–224 (LADR…HGSD) and 237–256 (DDRN…DSSR).

Component of the nuclear exosome targeting (NEXT) complex composed of MTREX, ZCCHC8, and RBM7 that directs a subset of non-coding short-lived RNAs for exosomal degradation. Interacts with ZCCHC8 and SF3B2/SAP145. Binds to MTREX through ZCCHC8. Interacts with YWHAE and YWHAZ; these interactions are stress-dependent and RBM7 phosphorylation dependent; release RNA from the NEXT complex and may affect RNA targeting to the nuclear RNA exosomome for degradation. Interacts with MEPCE and LARP7, the core subunits of 7SK snRNP; upon genotoxic stress this interaction is enhanced, triggering the release of inactive P-TEFb complex from the core and P-TEFb complex activation. In terms of processing, phosphorylated at Ser-136 by MAPK14/p38-alpha-activated MAPKAPK2/MK2; this phosphorylation is stress-dependent; this phosphorylation decreases its RNA-binding capacity therefore affecting RNA nuclear exosome-mediated degradation. This phosphorylation mediates YWHAE and YWHAZ interactions.

It localises to the nucleus. It is found in the nucleoplasm. Its function is as follows. RNA-binding subunit of the trimeric nuclear exosome targeting (NEXT) complex, a complex that functions as an RNA exosome cofactor that directs a subset of non-coding short-lived RNAs for exosomal degradation. NEXT is involved in surveillance and turnover of aberrant transcripts and non-coding RNAs. Binds preferentially polyuridine sequences and associates with newly synthesized RNAs, including pre-mRNAs and short-lived exosome substrates such as promoter upstream transcripts (PROMPTs), enhancer RNAs (eRNAs), and 3'-extended products from small nuclear RNAs (snRNAs). Participates in several biological processes including DNA damage response (DDR) and stress response. During stress response, activation of the p38MAPK-MK2 pathway decreases RBM7-RNA-binding and subsequently the RNA exosome degradation activities, thereby modulating the turnover of non-coding transcriptome. Participates in DNA damage response (DDR), through its interaction with MEPCE and LARP7, the core subunits of 7SK snRNP complex, that release the positive transcription elongation factor b (P-TEFb) complex from the 7SK snRNP. In turn, activation of P-TEFb complex induces the transcription of P-TEFb-dependent DDR genes to promote cell viability. The sequence is that of RNA-binding protein 7 from Mus musculus (Mouse).